Reading from the N-terminus, the 251-residue chain is Geranylgeranylglyceryl phosphate synthase (251 aa).

Mg(2+) contacts are provided by Asp-25 and Ser-54. Residues 173–179, 204–205, and 226–227 contribute to the sn-glycerol 1-phosphate site; these read YLEAGSG, GG, and GT.

It belongs to the GGGP/HepGP synthase family. Group II subfamily. The cofactor is Mg(2+).

The protein localises to the cytoplasm. The enzyme catalyses sn-glycerol 1-phosphate + (2E,6E,10E)-geranylgeranyl diphosphate = sn-3-O-(geranylgeranyl)glycerol 1-phosphate + diphosphate. It participates in membrane lipid metabolism; glycerophospholipid metabolism. In terms of biological role, prenyltransferase that catalyzes the transfer of the geranylgeranyl moiety of geranylgeranyl diphosphate (GGPP) to the C3 hydroxyl of sn-glycerol-1-phosphate (G1P). This reaction is the first ether-bond-formation step in the biosynthesis of archaeal membrane lipids. This Pyrococcus furiosus (strain ATCC 43587 / DSM 3638 / JCM 8422 / Vc1) protein is Geranylgeranylglyceryl phosphate synthase.